The sequence spans 360 residues: Mannitol-1-phosphate 5-dehydrogenase (360 aa).

6–17 serves as a coordination point for NAD(+); the sequence is ALHFGAGNIGRG.

Belongs to the mannitol dehydrogenase family.

The enzyme catalyses D-mannitol 1-phosphate + NAD(+) = beta-D-fructose 6-phosphate + NADH + H(+). The protein is Mannitol-1-phosphate 5-dehydrogenase of Mycoplasmopsis pulmonis (strain UAB CTIP) (Mycoplasma pulmonis).